The following is a 180-amino-acid chain: High mobility group protein B1 (180 aa).

The Nuclear localization signal (NLS) 1 motif lies at 1 to 8 (VNFSEFSK). Residues 1–44 (VNFSEFSKKCSERWKTMSAKEKGKFEDMAKADKARYEREMKTYI) constitute a DNA-binding region (HMG box 1). Lys-8 carries the N6-acetyllysine modification. Isoglutamyl lysine isopeptide (Lys-Gln) (interchain with Q-?) cross-links involve residues Lys-8 and Lys-9. Cys-10 bears the Cysteine sulfonic acid (-SO3H) mark. Residue Lys-33 forms an Isoglutamyl lysine isopeptide (Lys-Gln) (interchain with Q-?) linkage. An LPS binding (Lipid A) region spans residues 45–61 (PPKGETKKKFKDPNAPK). The tract at residues 54–73 (FKDPNAPKRPPSAFFLFCSE) is cytokine-stimulating activity. Lys-55 carries the post-translational modification N6-acetyllysine. Residues 60–128 (PKRPPSAFFL…KYEKDIAAYR (69 aa)) constitute a DNA-binding region (HMG box 2). A Phosphoserine modification is found at Ser-65. Position 71 is a cysteine sulfonic acid (-SO3H) (Cys-71). N6-acetyllysine occurs at positions 92, 93, 106, 137, 138, 142, and 145. The binding to AGER/RAGE stretch occupies residues 115-148 (KLKEKYEKDIAAYRAKGKPDAAKKGVVKAEKSKK). Positions 126–144 (AYRAKGKPDAAKKGVVKAE) are enriched in basic and acidic residues. The tract at residues 126-180 (AYRAKGKPDAAKKGVVKAEKSKKKKEEEDDEEDEEDEEEEEEEEDEDEEEDDDDE) is disordered. Residues 143 to 149 (AEKSKKK) carry the Nuclear localization signal (NLS) 2 motif. The segment at 143-149 (AEKSKKK) is NLS 2. Lys-145 is covalently cross-linked (Isoglutamyl lysine isopeptide (Lys-Gln) (interchain with Q-?)). Ser-146 is modified (ADP-ribosylserine). 4 positions are modified to N6-acetyllysine: Lys-147, Lys-148, Lys-149, and Lys-150. Residues Lys-147, Lys-148, and Lys-149 each participate in an isoglutamyl lysine isopeptide (Lys-Gln) (interchain with Q-?) cross-link. Positions 152–180 (EEDDEEDEEDEEEEEEEEDEDEEEDDDDE) are enriched in acidic residues.

It belongs to the HMGB family. As to quaternary structure, interacts (fully reduced HMGB1) with CXCL12; probably in a 1:2 ratio involving two molecules of CXCL12, each interacting with one HMG box of HMGB1; inhibited by glycyrrhizin. Associates with the TLR4:LY96 receptor complex. Component of the RAG complex composed of core components RAG1 and RAG2, and associated component HMGB1 or HMGB2. Interacts (in cytoplasm upon starvation) with BECN1; inhibits the interaction of BECN1 and BCL2 leading to promotion of autophagy. Interacts with KPNA1; involved in nuclear import. Interacts with SREBF1, TLR2, TLR4, TLR9, PTPRZ1, APEX1, FEN1, POLB, TERT. Interacts with IL1B, AGER, MSH2, XPA, XPC, HNF1A, TP53. Interacts with CD24; the probable CD24:SIGLEC10 complex is proposed to inhibit HGMB1-mediated tissue damage immune response. Interacts with THBD; prevents HGMB1 interaction with ACER/RAGE and inhibits HGMB1 pro-inflammatory activity. Interacts with HAVCR2; impairs HMGB1 binding to B-DNA and likely HMGB1-mediated innate immune response. Interacts with XPO1; mediating nuclear export. Interacts with receptor RAGE/AGER. Post-translationally, phosphorylated at serine residues. Phosphorylation in both NLS regions is required for cytoplasmic translocation followed by secretion. In terms of processing, acetylated on multiple sites upon stimulation with LPS. Acetylation on lysine residues in the nuclear localization signals (NLS 1 and NLS 2) leads to cytoplasmic localization and subsequent secretion. Reduction/oxidation of cysteine residues and a possible intramolecular disulfide bond give rise to different redox forms with specific functional activities in various cellular compartments: 1- fully reduced HMGB1 (HMGB1C23hC45hC106h), 2-disulfide HMGB1 (HMGB1C23-C45C106h) and 3- sulfonyl HMGB1 (HMGB1C23soC45soC106so). Post-translationally, poly-ADP-ribosylated by PARP1 when secreted following stimulation with LPS. In terms of processing, in vitro cleavage by CASP1 is liberating a HMG box 1-containing peptide which may mediate immunogenic activity; the peptide antagonizes apoptosis-induced immune tolerance. Can be proteolytically cleaved by a thrombin:thrombomodulin complex; reduces binding to heparin and pro-inflammatory activities. Forms covalent cross-links mediated by transglutaminase TGM2, between a glutamine and the epsilon-amino group of a lysine residue, forming homopolymers and heteropolymers.

It is found in the nucleus. The protein resides in the chromosome. It localises to the cytoplasm. The protein localises to the secreted. Its subcellular location is the cell membrane. It is found in the endosome. The protein resides in the endoplasmic reticulum-Golgi intermediate compartment. Functionally, multifunctional redox sensitive protein with various roles in different cellular compartments. In the nucleus is one of the major chromatin-associated non-histone proteins and acts as a DNA chaperone involved in replication, transcription, chromatin remodeling, V(D)J recombination, DNA repair and genome stability. Proposed to be an universal biosensor for nucleic acids. Promotes host inflammatory response to sterile and infectious signals and is involved in the coordination and integration of innate and adaptive immune responses. In the cytoplasm functions as a sensor and/or chaperone for immunogenic nucleic acids implicating the activation of TLR9-mediated immune responses, and mediates autophagy. Acts as a danger-associated molecular pattern (DAMP) molecule that amplifies immune responses during tissue injury. Released to the extracellular environment can bind DNA, nucleosomes, IL-1 beta, CXCL12, AGER isoform 2/sRAGE, lipopolysaccharide (LPS) and lipoteichoic acid (LTA), and activates cells through engagement of multiple surface receptors. In the extracellular compartment fully reduced HMGB1 (released by necrosis) acts as a chemokine, disulfide HMGB1 (actively secreted) as a cytokine, and sulfonyl HMGB1 (released from apoptotic cells) promotes immunological tolerance. Has proangiogenic activity. May be involved in platelet activation. Binds to phosphatidylserine and phosphatidylethanolamide. Bound to RAGE mediates signaling for neuronal outgrowth. May play a role in accumulation of expanded polyglutamine (polyQ) proteins. Nuclear functions are attributed to fully reduced HGMB1. Associates with chromatin and binds DNA with a preference to non-canonical DNA structures such as single-stranded DNA, DNA-containing cruciforms or bent structures, supercoiled DNA and ZDNA. Can bent DNA and enhance DNA flexibility by looping thus providing a mechanism to promote activities on various gene promoters by enhancing transcription factor binding and/or bringing distant regulatory sequences into close proximity. May be involved in nucleotide excision repair (NER), mismatch repair (MMR) and base excision repair (BER) pathways, and double strand break repair such as non-homologous end joining (NHEJ). Involved in V(D)J recombination by acting as a cofactor of the RAG complex: acts by stimulating cleavage and RAG protein binding at the 23 bp spacer of conserved recombination signal sequences (RSS). In vitro can displace histone H1 from highly bent DNA. Can restructure the canonical nucleosome leading to relaxation of structural constraints for transcription factor-binding. Enhances binding of sterol regulatory element-binding proteins (SREBPs) such as SREBF1 to their cognate DNA sequences and increases their transcriptional activities. Facilitates binding of TP53 to DNA. May be involved in mitochondrial quality control and autophagy in a transcription-dependent fashion implicating HSPB1. Can modulate the activity of the telomerase complex and may be involved in telomere maintenance. In terms of biological role, in the cytoplasm proposed to dissociate the BECN1:BCL2 complex via competitive interaction with BECN1 leading to autophagy activation. Can protect BECN1 and ATG5 from calpain-mediated cleavage and thus proposed to control their proautophagic and proapoptotic functions and to regulate the extent and severity of inflammation-associated cellular injury. In myeloid cells has a protective role against endotoxemia and bacterial infection by promoting autophagy. Involved in endosomal translocation and activation of TLR9 in response to CpG-DNA in macrophages. Its function is as follows. In the extracellular compartment (following either active secretion or passive release) involved in regulation of the inflammatory response. Fully reduced HGMB1 (which subsequently gets oxidized after release) in association with CXCL12 mediates the recruitment of inflammatory cells during the initial phase of tissue injury; the CXCL12:HMGB1 complex triggers CXCR4 homodimerization. Induces the migration of monocyte-derived immature dendritic cells and seems to regulate adhesive and migratory functions of neutrophils implicating AGER/RAGE and ITGAM. Can bind to various types of DNA and RNA including microbial unmethylated CpG-DNA to enhance the innate immune response to nucleic acids. Proposed to act in promiscuous DNA/RNA sensing which cooperates with subsequent discriminative sensing by specific pattern recognition receptors. Promotes extracellular DNA-induced AIM2 inflammasome activation implicating AGER/RAGE. Disulfide HMGB1 binds to transmembrane receptors, such as AGER/RAGE, TLR2, TLR4 and probably TREM1, thus activating their signal transduction pathways. Mediates the release of cytokines/chemokines such as TNF, IL-1, IL-6, IL-8, CCL2, CCL3, CCL4 and CXCL10. Promotes secretion of interferon-gamma by macrophage-stimulated natural killer (NK) cells in concert with other cytokines like IL-2 or IL-12. TLR4 is proposed to be the primary receptor promoting macrophage activation and signaling through TLR4 seems to implicate LY96/MD-2. In bacterial LPS- or LTA-mediated inflammatory responses binds to the endotoxins and transfers them to CD14 for signaling to the respective TLR4:LY96 and TLR2 complexes. Contributes to tumor proliferation by association with ACER/RAGE. Can bind to IL1-beta and signals through the IL1R1:IL1RAP receptor complex. Binding to class A CpG activates cytokine production in plasmacytoid dendritic cells implicating TLR9, MYD88 and AGER/RAGE and can activate autoreactive B cells. Via HMGB1-containing chromatin immune complexes may also promote B cell responses to endogenous TLR9 ligands through a B-cell receptor (BCR)-dependent and ACER/RAGE-independent mechanism. Inhibits phagocytosis of apoptotic cells by macrophages; the function is dependent on poly-ADP-ribosylation and involves binding to phosphatidylserine on the cell surface of apoptotic cells. In adaptive immunity may be involved in enhancing immunity through activation of effector T-cells and suppression of regulatory T (TReg) cells. In contrast, without implicating effector or regulatory T-cells, required for tumor infiltration and activation of T-cells expressing the lymphotoxin LTA:LTB heterotrimer thus promoting tumor malignant progression. Also reported to limit proliferation of T-cells. Released HMGB1:nucleosome complexes formed during apoptosis can signal through TLR2 to induce cytokine production. Involved in induction of immunological tolerance by apoptotic cells; its pro-inflammatory activities when released by apoptotic cells are neutralized by reactive oxygen species (ROS)-dependent oxidation specifically on Cys-106. During macrophage activation by activated lymphocyte-derived self apoptotic DNA (ALD-DNA) promotes recruitment of ALD-DNA to endosomes. The sequence is that of High mobility group protein B1 (HMGB1) from Cricetulus griseus (Chinese hamster).